The sequence spans 102 residues: Protein translation factor SUI1 homolog (102 aa).

It belongs to the SUI1 family.

In Nitrosopumilus maritimus (strain SCM1), this protein is Protein translation factor SUI1 homolog.